We begin with the raw amino-acid sequence, 438 residues long: MQVTVEDLSSVKKVLHIEAPAEDVKKALDSAYAELKKQAKVKGFRPGKAPRSVLERLYKSDVESDVAGEIISDAFRDAIMETKLKIVGPPEIEPPAIVSDEPYKFDATVEIFPELSDLNLKEIELSKNMYKATEQEIENQIAMIRKNMSSLETEEEDRPAKEEDFVLIDYEGVCPDGQPDELRFTENFTMELGTGRILKDFDAQIVGMKRDEEKDFEISFPEDYFNKELASKQVKFHVKLKEIRKQILPELDDEFAKDLGEYETLDQLKDSIRDHLQQGYDRRSEQELDEQVFQALLNRVEFEVPETLIKHETASMVSEAERALSYRDMTFEDTGATKEDMEERYREPAEQQVRRYLLLDKIVEQENVELPEEELENAFKGMAESLRQPLEIVKKYYASDAEQMNMLRQTLLQKEALKYVKNLNEIKEVELELQETEE.

Residues 163–249 form the PPIase FKBP-type domain; the sequence is EDFVLIDYEG…LKEIRKQILP (87 aa).

Belongs to the FKBP-type PPIase family. Tig subfamily.

It localises to the cytoplasm. The catalysed reaction is [protein]-peptidylproline (omega=180) = [protein]-peptidylproline (omega=0). In terms of biological role, involved in protein export. Acts as a chaperone by maintaining the newly synthesized protein in an open conformation. Functions as a peptidyl-prolyl cis-trans isomerase. This chain is Trigger factor, found in Desulfatibacillum aliphaticivorans.